Consider the following 322-residue polypeptide: D-specific alpha-keto acid dehydrogenase (322 aa).

Residues 156–157, 229–231, and Asp255 each bind NAD(+); these read QI and TGR. Arg231 is a catalytic residue. The active site involves Glu260. His292 functions as the Proton donor in the catalytic mechanism. Residue 292–295 coordinates NAD(+); the sequence is HTAY.

The protein belongs to the D-isomer specific 2-hydroxyacid dehydrogenase family.

It carries out the reaction a (2R)-2-hydroxycarboxylate + NADP(+) = a 2-oxocarboxylate + NADPH + H(+). The enzyme catalyses a (2R)-2-hydroxycarboxylate + NAD(+) = a 2-oxocarboxylate + NADH + H(+). It catalyses the reaction (R)-lactate + NADP(+) = pyruvate + NADPH + H(+). The catalysed reaction is (R)-lactate + NAD(+) = pyruvate + NADH + H(+). It carries out the reaction (2R)-hydroxybutanoate + NADP(+) = 2-oxobutanoate + NADPH + H(+). Its function is as follows. Required for high-level resistance to glycopeptide antibiotics. Catalyzes the reduction of 2-keto acids to 2-D-hydroxy acids, exhibiting highest catalytic efficiency with pyruvate and 2-oxobutanoate/alpha-ketobutyrate as substrates, producing D-lactate and (2R)-hydroxybutanoate, respectively. Together with D-alanine--D-lactate ligase VanA, gives rise to peptidoglycan precursors that terminate in the depsipeptide D-alanine-D-lactate rather than the dipeptide D-alanine-D-alanine thus preventing vancomycin binding. Shows a slight preference for NADPH over NADH as the electron donor. This Enterococcus faecium (Streptococcus faecium) protein is D-specific alpha-keto acid dehydrogenase.